Reading from the N-terminus, the 48-residue chain is M-oxotoxin-Ot1b (48 aa).

Its subcellular location is the secreted. The protein localises to the target cell membrane. In terms of biological role, disrupts cell membranes, particularly those rich in phosphocholine, through formation of pores. Has antimicrobial activity, hemolytic activity and insecticidal activity. The polypeptide is M-oxotoxin-Ot1b (Oxyopes takobius (Lynx spider)).